Here is a 552-residue protein sequence, read N- to C-terminus: CTP synthase (552 aa).

Residues 1 to 270 (MTKYVFVTGG…DRIICEELKL (270 aa)) form an amidoligase domain region. S13 contacts CTP. S13 serves as a coordination point for UTP. ATP contacts are provided by residues 14 to 19 (SLGKGI) and D71. Residues D71 and E144 each contribute to the Mg(2+) site. CTP is bound by residues 151-153 (DIE), 191-196 (KTKPTQ), and K227. Residues 191 to 196 (KTKPTQ) and K227 each bind UTP. A Glutamine amidotransferase type-1 domain is found at 295–547 (TIGMVGKYVD…VEAALANKQA (253 aa)). G356 contributes to the L-glutamine binding site. The Nucleophile; for glutamine hydrolysis role is filled by C383. L-glutamine contacts are provided by residues 384–387 (LGMQ), E407, and R473. Residues H520 and E522 contribute to the active site.

This sequence belongs to the CTP synthase family. Homotetramer.

It carries out the reaction UTP + L-glutamine + ATP + H2O = CTP + L-glutamate + ADP + phosphate + 2 H(+). The catalysed reaction is L-glutamine + H2O = L-glutamate + NH4(+). The enzyme catalyses UTP + NH4(+) + ATP = CTP + ADP + phosphate + 2 H(+). The protein operates within pyrimidine metabolism; CTP biosynthesis via de novo pathway; CTP from UDP: step 2/2. With respect to regulation, allosterically activated by GTP, when glutamine is the substrate; GTP has no effect on the reaction when ammonia is the substrate. The allosteric effector GTP functions by stabilizing the protein conformation that binds the tetrahedral intermediate(s) formed during glutamine hydrolysis. Inhibited by the product CTP, via allosteric rather than competitive inhibition. In terms of biological role, catalyzes the ATP-dependent amination of UTP to CTP with either L-glutamine or ammonia as the source of nitrogen. Regulates intracellular CTP levels through interactions with the four ribonucleotide triphosphates. In Burkholderia ambifaria (strain MC40-6), this protein is CTP synthase.